The primary structure comprises 477 residues: Glycogen synthase (477 aa).

ADP-alpha-D-glucose is bound at residue Lys-15.

It belongs to the glycosyltransferase 1 family. Bacterial/plant glycogen synthase subfamily.

It carries out the reaction [(1-&gt;4)-alpha-D-glucosyl](n) + ADP-alpha-D-glucose = [(1-&gt;4)-alpha-D-glucosyl](n+1) + ADP + H(+). Its pathway is glycan biosynthesis; glycogen biosynthesis. Functionally, synthesizes alpha-1,4-glucan chains using ADP-glucose. The sequence is that of Glycogen synthase from Serratia proteamaculans (strain 568).